Here is a 90-residue protein sequence, read N- to C-terminus: MKPMYRSRSWRRKYVRTPGGRTVIHFERRKPKVAHCAMCGRPLNGVPRGRPSELRKLPKTKKRPERPYPNLCPSCMRKVMKAQVRASITA.

Residues C36, C39, C72, and C75 each contribute to the Zn(2+) site. The interval 41-72 is disordered; it reads RPLNGVPRGRPSELRKLPKTKKRPERPYPNLC.

The protein belongs to the eukaryotic ribosomal protein eL34 family. Part of the 50S ribosomal subunit. Zn(2+) serves as cofactor.

This chain is Large ribosomal subunit protein eL34, found in Thermococcus kodakarensis (strain ATCC BAA-918 / JCM 12380 / KOD1) (Pyrococcus kodakaraensis (strain KOD1)).